Consider the following 373-residue polypeptide: P2Y purinoceptor 1 (373 aa).

Topologically, residues 1-51 (MTEVLWPAVPNGTDTAFLADPGSPWGNSTVTSTAAVASPFKCALTKTGFQF) are extracellular. N-linked (GlcNAc...) asparagine glycosylation is found at Asn-11 and Asn-27. Cystine bridges form between Cys-42–Cys-296 and Cys-124–Cys-202. Lys-46 is an ADP binding site. A helical transmembrane segment spans residues 52–74 (YYLPAVYILVFIIGFLGNSVAIW). At 75–87 (MFVFHMKPWSGIS) the chain is on the cytoplasmic side. A helical membrane pass occupies residues 88–109 (VYMFNLALADFLYVLTLPALIF). The Extracellular segment spans residues 110–125 (YYFNKTDWIFGDAMCK). The N-linked (GlcNAc...) asparagine glycan is linked to Asn-113. A helical membrane pass occupies residues 126-147 (LQRFIFHVNLYGSILFLTCISA). Residues 148-166 (HRYSGVVYPLKSLGRLKKK) are Cytoplasmic-facing. A helical transmembrane segment spans residues 167-188 (NAVYISVLVWLIVVVGISPILF). At 189 to 214 (YSGTGIRKNKTITCYDTTSDEYLRSY) the chain is on the extracellular side. N-linked (GlcNAc...) asparagine glycosylation is present at Asn-197. Residue 203-205 (YDT) coordinates ADP. A helical membrane pass occupies residues 215–237 (FIYSMCTTVAMFCVPLVLILGCY). Topologically, residues 238–260 (GLIVRALIYKDLDNSPLRRKSIY) are cytoplasmic. The helical transmembrane segment at 261 to 284 (LVIIVLTVFAVSYIPFHVMKTMNL) threads the bilayer. Residues 283–287 (NLRAR), 303–306 (YATY), and Arg-310 contribute to the ADP site. Topologically, residues 285–303 (RARLDFQTPEMCAFNDRVY) are extracellular. A helical transmembrane segment spans residues 304 to 325 (ATYQVTRGLASLNSCVDPILYF). The Cytoplasmic segment spans residues 326–373 (LAGDTFRRRLSRATRKASRRSEANLQSKSEDMTLNILSEFKQNGDTSL).

This sequence belongs to the G-protein coupled receptor 1 family.

The protein localises to the cell membrane. Functionally, receptor for extracellular adenine nucleotides such as ADP. In platelets, binding to ADP leads to mobilization of intracellular calcium ions via activation of phospholipase C, a change in platelet shape, and ultimately platelet aggregation. The chain is P2Y purinoceptor 1 (P2RY1) from Bos taurus (Bovine).